The sequence spans 336 residues: UDP-3-O-acylglucosamine N-acyltransferase (336 aa).

His233 serves as the catalytic Proton acceptor.

Belongs to the transferase hexapeptide repeat family. LpxD subfamily. As to quaternary structure, homotrimer.

It carries out the reaction a UDP-3-O-[(3R)-3-hydroxyacyl]-alpha-D-glucosamine + a (3R)-hydroxyacyl-[ACP] = a UDP-2-N,3-O-bis[(3R)-3-hydroxyacyl]-alpha-D-glucosamine + holo-[ACP] + H(+). Its pathway is bacterial outer membrane biogenesis; LPS lipid A biosynthesis. Catalyzes the N-acylation of UDP-3-O-acylglucosamine using 3-hydroxyacyl-ACP as the acyl donor. Is involved in the biosynthesis of lipid A, a phosphorylated glycolipid that anchors the lipopolysaccharide to the outer membrane of the cell. The polypeptide is UDP-3-O-acylglucosamine N-acyltransferase (Helicobacter pylori (strain J99 / ATCC 700824) (Campylobacter pylori J99)).